The primary structure comprises 159 residues: Ribosomal RNA large subunit methyltransferase H (159 aa).

S-adenosyl-L-methionine-binding positions include Leu-76, Gly-108, and Phe-127–Phe-132.

This sequence belongs to the RNA methyltransferase RlmH family. In terms of assembly, homodimer.

The protein resides in the cytoplasm. It catalyses the reaction pseudouridine(1915) in 23S rRNA + S-adenosyl-L-methionine = N(3)-methylpseudouridine(1915) in 23S rRNA + S-adenosyl-L-homocysteine + H(+). Functionally, specifically methylates the pseudouridine at position 1915 (m3Psi1915) in 23S rRNA. The sequence is that of Ribosomal RNA large subunit methyltransferase H from Halalkalibacterium halodurans (strain ATCC BAA-125 / DSM 18197 / FERM 7344 / JCM 9153 / C-125) (Bacillus halodurans).